The primary structure comprises 131 residues: Profilin-3 (131 aa).

It belongs to the profilin family. As to quaternary structure, occurs in many kinds of cells as a complex with monomeric actin in a 1:1 ratio.

It is found in the cytoplasm. The protein resides in the cytoskeleton. Functionally, binds to actin and affects the structure of the cytoskeleton. At high concentrations, profilin prevents the polymerization of actin, whereas it enhances it at low concentrations. By binding to PIP2, it inhibits the formation of IP3 and DG. This Triticum aestivum (Wheat) protein is Profilin-3 (PRO3).